A 312-amino-acid chain; its full sequence is Acetylglutamate kinase (312 aa).

Substrate contacts are provided by residues 69 to 70 (GG), Arg-91, and Asn-191.

Belongs to the acetylglutamate kinase family. ArgB subfamily.

It is found in the cytoplasm. It catalyses the reaction N-acetyl-L-glutamate + ATP = N-acetyl-L-glutamyl 5-phosphate + ADP. It functions in the pathway amino-acid biosynthesis; L-arginine biosynthesis; N(2)-acetyl-L-ornithine from L-glutamate: step 2/4. Catalyzes the ATP-dependent phosphorylation of N-acetyl-L-glutamate. This Streptomyces griseus subsp. griseus (strain JCM 4626 / CBS 651.72 / NBRC 13350 / KCC S-0626 / ISP 5235) protein is Acetylglutamate kinase.